The chain runs to 176 residues: Large ribosomal subunit protein uL5 (176 aa).

Belongs to the universal ribosomal protein uL5 family. In terms of assembly, part of the 50S ribosomal subunit; contacts the 5S rRNA and probably tRNA. Forms a bridge to the 30S subunit in the 70S ribosome.

Functionally, this is one of the proteins that bind and probably mediate the attachment of the 5S RNA into the large ribosomal subunit, where it forms part of the central protuberance. In the 70S ribosome it contacts protein S13 of the 30S subunit (bridge B1b), connecting the 2 subunits; this bridge is implicated in subunit movement. May contact the P site tRNA; the 5S rRNA and some of its associated proteins might help stabilize positioning of ribosome-bound tRNAs. In Picrophilus torridus (strain ATCC 700027 / DSM 9790 / JCM 10055 / NBRC 100828 / KAW 2/3), this protein is Large ribosomal subunit protein uL5.